Here is a 186-residue protein sequence, read N- to C-terminus: Spermidine N(1)-acetyltransferase (186 aa).

Positions 7-167 (VKLRPLERED…NAIRMCIFQH (161 aa)) constitute an N-acetyltransferase domain. Spermine is bound by residues Met-30, Glu-35, Glu-43, and 51–54 (HIHD). Glu-35 serves as a coordination point for Mg(2+). Residues Glu-35 and Glu-43 each contribute to the spermidine site. Glu-76 lines the Mg(2+) pocket. Residue 85–87 (EFQ) coordinates spermine. Acetyl-CoA contacts are provided by residues 88–90 (III), 95–101 (QGKGLAT), and 128–137 (NEKAIHIYRK). Tyr-135 functions as the Proton donor in the catalytic mechanism.

This sequence belongs to the acetyltransferase family. As to quaternary structure, homododecamer.

It localises to the cytoplasm. It catalyses the reaction an alkane-alpha,omega-diamine + acetyl-CoA = an N-acetylalkane-alpha,omega-diamine + CoA + H(+). It carries out the reaction spermidine + acetyl-CoA = N(1)-acetylspermidine + CoA + H(+). The enzyme catalyses spermidine + acetyl-CoA = N(8)-acetylspermidine + CoA + H(+). The catalysed reaction is spermine + acetyl-CoA = N(1)-acetylspermine + CoA + H(+). It functions in the pathway amine and polyamine degradation; spermidine degradation. It participates in amine and polyamine degradation; spermine degradation. Its function is as follows. Involved in the protection against polyamine toxicity by regulating their concentration. Catalyzes the transfer of an acetyl group from acetyl coenzyme A (AcCoA) to the primary amino groups of spermidine to yield N(1)- and N(8)-acetylspermidine. It can also use spermine. This is Spermidine N(1)-acetyltransferase (speG) from Escherichia coli O157:H7.